Here is a 410-residue protein sequence, read N- to C-terminus: Histidine--tRNA ligase (410 aa).

It belongs to the class-II aminoacyl-tRNA synthetase family.

It is found in the cytoplasm. It catalyses the reaction tRNA(His) + L-histidine + ATP = L-histidyl-tRNA(His) + AMP + diphosphate + H(+). This Methanocorpusculum labreanum (strain ATCC 43576 / DSM 4855 / Z) protein is Histidine--tRNA ligase.